A 533-amino-acid chain; its full sequence is T-complex protein 1 subunit delta (533 aa).

Polar residues predominate over residues M1–T15. The interval M1–V25 is disordered. Over residues F16–V25 the composition is skewed to basic and acidic residues.

It belongs to the TCP-1 chaperonin family. As to quaternary structure, heterooligomeric complex of about 850 to 900 kDa that forms two stacked rings, 12 to 16 nm in diameter.

Its subcellular location is the cytoplasm. In terms of biological role, molecular chaperone; assists the folding of proteins upon ATP hydrolysis. Known to play a role, in vitro, in the folding of actin and tubulin. This Debaryomyces hansenii (strain ATCC 36239 / CBS 767 / BCRC 21394 / JCM 1990 / NBRC 0083 / IGC 2968) (Yeast) protein is T-complex protein 1 subunit delta (CCT4).